The sequence spans 334 residues: D-alanine--D-alanine ligase (334 aa).

The 206-residue stretch at 124–329 folds into the ATP-grasp domain; sequence KMWFSALGIP…FAQYLSGNIL (206 aa). ATP is bound at residue 154–209; sequence ALAKWGSIFIKAASQGSSVGCYRVDSIEQLASSLEEAFTFSPYVVIEKTITARELE. Mg(2+)-binding residues include aspartate 283, glutamate 296, and asparagine 298.

This sequence belongs to the D-alanine--D-alanine ligase family. It depends on Mg(2+) as a cofactor. The cofactor is Mn(2+).

The protein resides in the cytoplasm. It catalyses the reaction 2 D-alanine + ATP = D-alanyl-D-alanine + ADP + phosphate + H(+). It functions in the pathway cell wall biogenesis; peptidoglycan biosynthesis. Cell wall formation. The protein is D-alanine--D-alanine ligase of Shewanella pealeana (strain ATCC 700345 / ANG-SQ1).